A 112-amino-acid polypeptide reads, in one-letter code: Nitrogen regulatory protein P-II (112 aa).

Tyrosine 51 bears the O-UMP-tyrosine mark.

The protein belongs to the P(II) protein family. In terms of assembly, homotrimer.

In nitrogen-limiting conditions, when the ratio of Gln to 2-ketoglutarate decreases, P-II is uridylylated to P-II-UMP. P-II-UMP allows the deadenylation of glutamine synthetase (GS), thus activating the enzyme. Conversely, in nitrogen excess P-II is deuridylated and promotes the adenylation of GS. P-II indirectly controls the transcription of the GS gene (glnA). P-II prevents NR-II-catalyzed conversion of NR-I to NR-I-phosphate, the transcriptional activator of glnA. When P-II is uridylylated to P-II-UMP, these events are reversed. The protein is Nitrogen regulatory protein P-II (glnB) of Bradyrhizobium diazoefficiens (strain JCM 10833 / BCRC 13528 / IAM 13628 / NBRC 14792 / USDA 110).